The primary structure comprises 669 residues: DNA ligase (669 aa).

An NAD(+)-binding site is contributed by 35–39 (DFEYD). Positions 52-71 (YPEWDSPDSPTHRVGSDKTE) are disordered. The span at 61–71 (PTHRVGSDKTE) shows a compositional bias: basic and acidic residues. NAD(+) is bound by residues 84–85 (SL) and glutamate 115. The active-site N6-AMP-lysine intermediate is lysine 117. NAD(+)-binding residues include arginine 138, glutamate 175, lysine 290, and lysine 314. 4 residues coordinate Zn(2+): cysteine 408, cysteine 411, cysteine 426, and cysteine 432. The BRCT domain occupies 590 to 669 (PVSARLAGKT…EEEFLRLIEE (80 aa)).

It belongs to the NAD-dependent DNA ligase family. LigA subfamily. The cofactor is Mg(2+). Mn(2+) is required as a cofactor.

The catalysed reaction is NAD(+) + (deoxyribonucleotide)n-3'-hydroxyl + 5'-phospho-(deoxyribonucleotide)m = (deoxyribonucleotide)n+m + AMP + beta-nicotinamide D-nucleotide.. Its function is as follows. DNA ligase that catalyzes the formation of phosphodiester linkages between 5'-phosphoryl and 3'-hydroxyl groups in double-stranded DNA using NAD as a coenzyme and as the energy source for the reaction. It is essential for DNA replication and repair of damaged DNA. This Porphyromonas gingivalis (strain ATCC 33277 / DSM 20709 / CIP 103683 / JCM 12257 / NCTC 11834 / 2561) protein is DNA ligase.